Here is a 273-residue protein sequence, read N- to C-terminus: Dermonecrotic toxin LdSicTox-alphaIB1av (273 aa).

The active site involves H5. Positions 25 and 27 each coordinate Mg(2+). Residue H41 is the Nucleophile of the active site. 2 cysteine pairs are disulfide-bonded: C45–C51 and C47–C190. D85 is a Mg(2+) binding site. A glycan (N-linked (GlcNAc...) asparagine) is linked at N250.

It belongs to the arthropod phospholipase D family. Class II subfamily. Mg(2+) serves as cofactor. Expressed by the venom gland.

It is found in the secreted. It catalyses the reaction an N-(acyl)-sphingosylphosphocholine = an N-(acyl)-sphingosyl-1,3-cyclic phosphate + choline. It carries out the reaction an N-(acyl)-sphingosylphosphoethanolamine = an N-(acyl)-sphingosyl-1,3-cyclic phosphate + ethanolamine. The enzyme catalyses a 1-acyl-sn-glycero-3-phosphocholine = a 1-acyl-sn-glycero-2,3-cyclic phosphate + choline. The catalysed reaction is a 1-acyl-sn-glycero-3-phosphoethanolamine = a 1-acyl-sn-glycero-2,3-cyclic phosphate + ethanolamine. Dermonecrotic toxins cleave the phosphodiester linkage between the phosphate and headgroup of certain phospholipids (sphingolipid and lysolipid substrates), forming an alcohol (often choline) and a cyclic phosphate. This toxin acts on sphingomyelin (SM). It may also act on ceramide phosphoethanolamine (CPE), lysophosphatidylcholine (LPC) and lysophosphatidylethanolamine (LPE), but not on lysophosphatidylserine (LPS), and lysophosphatidylglycerol (LPG). It acts by transphosphatidylation, releasing exclusively cyclic phosphate products as second products. Induces dermonecrosis, hemolysis, increased vascular permeability, edema, inflammatory response, and platelet aggregation. The polypeptide is Dermonecrotic toxin LdSicTox-alphaIB1av (Loxosceles deserta (Desert recluse spider)).